A 423-amino-acid polypeptide reads, in one-letter code: Vitamin D3 receptor (423 aa).

Zn(2+) is bound by residues cysteine 24, cysteine 27, cysteine 41, cysteine 44, cysteine 60, cysteine 66, cysteine 76, and cysteine 79. 2 consecutive NR C4-type zinc fingers follow at residues 24 to 44 and 60 to 84; these read CGVCGDRATGFHFNAMTCEGC and CPFNGDCRITKDNRRHCQACRLKRC. A DNA-binding region (nuclear receptor) is located at residues 24–89; that stretch reads CGVCGDRATG…RLKRCVDIGM (66 aa). The segment at 97 to 126 is hinge; that stretch reads DEEVQRKREMIMKRKEEEALKDSLRPKLSE. Residues 127 to 419 form the NR LBD domain; sequence EQQHIIAILL…LTPLVLEVFG (293 aa). Tyrosine 143 contacts calcitriol. A disordered region spans residues 159-180; that stretch reads MDGSTGSYSPRPTLSFSGNSSS. The segment covering 171–180 has biased composition (low complexity); it reads TLSFSGNSSS. Serine 233 contacts calcitriol. An interaction with coactivator LXXLL motif region spans residues 242–260; that stretch reads KMIPGFRDLTSDDQIVLLK. Calcitriol-binding residues include arginine 270, serine 274, histidine 301, and histidine 393. A 9aaTAD motif is present at residues 412 to 420; the sequence is PLVLEVFGN.

It belongs to the nuclear hormone receptor family. NR1 subfamily. In terms of assembly, homodimer in the absence of bound vitamin D3. Heterodimer with RXRA after vitamin D3 binding. Interacts with MED1 and NCOA6. Interacts with MED1, NCOA1, NCOA2, NCOA3 and NCOA6 coactivators, leading to a strong increase of transcription of target genes. Interacts with the corepressor NCOR1. Interacts with SNW1. Interacts with IRX4, the interaction does not affect its transactivation activity. Interacts with CRY1. Interacts with CRY2 in a ligand-dependent manner. Post-translationally, ubiquitinated by UBR5, leading to its degradation: UBR5 specifically recognizes and binds ligand-bound VDR when it is not associated with coactivators (NCOAs). In presence of NCOAs, the UBR5-degron is not accessible, preventing its ubiquitination and degradation. As to expression, detected in intestine and kidney.

The protein resides in the nucleus. It is found in the cytoplasm. Functionally, nuclear receptor for calcitriol, the active form of vitamin D3 which mediates the action of this vitamin on cells. Enters the nucleus upon vitamin D3 binding where it forms heterodimers with the retinoid X receptor/RXR. The VDR-RXR heterodimers bind to specific response elements on DNA and activate the transcription of vitamin D3-responsive target genes. Plays a central role in calcium homeostasis. Also functions as a receptor for the secondary bile acid lithocholic acid (LCA) and its metabolites. The sequence is that of Vitamin D3 receptor (Vdr) from Rattus norvegicus (Rat).